The sequence spans 145 residues: Venom protein 30.1 (145 aa).

Positions 1-18 (MIIVKLFTCLLMVSSVLT) are cleaved as a signal peptide.

In terms of processing, contains 5 disulfide bonds. As to expression, expressed by the venom gland.

Its subcellular location is the secreted. This Lychas mucronatus (Chinese swimming scorpion) protein is Venom protein 30.1.